The chain runs to 163 residues: 6,7-dimethyl-8-ribityllumazine synthase 1 (163 aa).

Residues F27, 58–60 (ALE), and 87–89 (CVV) contribute to the 5-amino-6-(D-ribitylamino)uracil site. 92-93 (ET) serves as a coordination point for (2S)-2-hydroxy-3-oxobutyl phosphate. Residue H95 is the Proton donor of the active site. A 5-amino-6-(D-ribitylamino)uracil-binding site is contributed by N120. R134 serves as a coordination point for (2S)-2-hydroxy-3-oxobutyl phosphate.

The protein belongs to the DMRL synthase family.

The catalysed reaction is (2S)-2-hydroxy-3-oxobutyl phosphate + 5-amino-6-(D-ribitylamino)uracil = 6,7-dimethyl-8-(1-D-ribityl)lumazine + phosphate + 2 H2O + H(+). The protein operates within cofactor biosynthesis; riboflavin biosynthesis; riboflavin from 2-hydroxy-3-oxobutyl phosphate and 5-amino-6-(D-ribitylamino)uracil: step 1/2. Catalyzes the formation of 6,7-dimethyl-8-ribityllumazine by condensation of 5-amino-6-(D-ribitylamino)uracil with 3,4-dihydroxy-2-butanone 4-phosphate. This is the penultimate step in the biosynthesis of riboflavin. The sequence is that of 6,7-dimethyl-8-ribityllumazine synthase 1 from Rhodopseudomonas palustris (strain ATCC BAA-98 / CGA009).